Consider the following 695-residue polypeptide: Elongation factor G 1 (695 aa).

In terms of domain architecture, tr-type G spans 6-284 (KKVRNIGISA…VTRYLPCPAD (279 aa)). GTP-binding positions include 15–22 (AHIDSGKT), 82–86 (DTPGH), and 136–139 (NKCD).

The protein belongs to the TRAFAC class translation factor GTPase superfamily. Classic translation factor GTPase family. EF-G/EF-2 subfamily.

The protein resides in the cytoplasm. Its function is as follows. Catalyzes the GTP-dependent ribosomal translocation step during translation elongation. During this step, the ribosome changes from the pre-translocational (PRE) to the post-translocational (POST) state as the newly formed A-site-bound peptidyl-tRNA and P-site-bound deacylated tRNA move to the P and E sites, respectively. Catalyzes the coordinated movement of the two tRNA molecules, the mRNA and conformational changes in the ribosome. This Syntrophus aciditrophicus (strain SB) protein is Elongation factor G 1.